The sequence spans 773 residues: Polyribonucleotide nucleotidyltransferase (773 aa).

The Mg(2+) site is built by aspartate 532 and aspartate 538. Residues 598-657 enclose the KH domain; it reads PRVITIKVPVDKIGEVIGPKGKVINAITEETGAQISIEDDGTVFVGATDGLSAQAAINKI. An S1 motif domain is found at 669 to 738; sequence GERFLGTVVK…KRGKISLVLV (70 aa). The disordered stretch occupies residues 749-773; that stretch reads APADAGAAQEFGSGTAPADAATASS.

This sequence belongs to the polyribonucleotide nucleotidyltransferase family. Mg(2+) is required as a cofactor.

Its subcellular location is the cytoplasm. It carries out the reaction RNA(n+1) + phosphate = RNA(n) + a ribonucleoside 5'-diphosphate. Its function is as follows. Involved in mRNA degradation. Catalyzes the phosphorolysis of single-stranded polyribonucleotides processively in the 3'- to 5'-direction. The sequence is that of Polyribonucleotide nucleotidyltransferase from Mycobacterium leprae (strain Br4923).